Here is a 457-residue protein sequence, read N- to C-terminus: Cyclic dof factor 2 (457 aa).

Residues methionine 1–lysine 130 are disordered. Residues aspartate 22–glutamine 35 show a composition bias toward polar residues. Acidic residues-rich tracts occupy residues threonine 45–glycine 54 and glutamate 62–serine 73. Basic and acidic residues-rich tracts occupy residues glutamate 74–serine 94 and glutamate 106–glutamate 118. Residues leucine 138–serine 192 form a Dof-type zinc finger. Zn(2+) contacts are provided by cysteine 140, cysteine 143, cysteine 165, and cysteine 168. Disordered stretches follow at residues glutamine 334–proline 377 and alanine 417–serine 457. Low complexity predominate over residues serine 337–proline 346.

As to quaternary structure, interacts with ADO2 (via kelch repeats) and ADO3 (via kelch repeats). In terms of tissue distribution, expressed in the vasculature of cotyledons and hypocotyls, leaves and roots.

It is found in the nucleus. In terms of biological role, transcription factor that binds specifically to a 5'-AA[AG]G-3' consensus core sequence. Regulates a photoperiodic flowering response. Transcriptional repressor of 'CONSTANS' expression. The stability of CDF2 is controlled by 'GIGANTEA' and redundantly by ADO3, ADO2 and/or ADO1. The polypeptide is Cyclic dof factor 2 (CDF2) (Arabidopsis thaliana (Mouse-ear cress)).